The following is a 134-amino-acid chain: Protein NrdI (134 aa).

Belongs to the NrdI family.

In terms of biological role, probably involved in ribonucleotide reductase function. The chain is Protein NrdI from Yersinia pseudotuberculosis serotype O:1b (strain IP 31758).